Consider the following 161-residue polypeptide: Troponin C, slow skeletal and cardiac muscles (161 aa).

Position 1 is an N-acetylmethionine (M1). 4 EF-hand domains span residues 16–51 (QKNEFKAAFDIFVLGAEDGCISTKELGKVMRMLGQN), 52–87 (PTPEELQEMIDEVDEDGSGTVDFDEFLVMMVRCMKD), 92–127 (KSEEELSDLFRMFDKNADGYIDLDELKMMLQATGET), and 128–161 (ITEDDIEELMKDGDKNNDGRIDYDEFLEFMKGVE). 5 residues coordinate Ca(2+): D65, D67, S69, T71, and E76. S98 is modified (phosphoserine). The Ca(2+) site is built by D105, N107, D109, Y111, E116, D141, N143, D145, R147, and E152.

It belongs to the troponin C family.

Its function is as follows. Troponin is the central regulatory protein of striated muscle contraction. Tn consists of three components: Tn-I which is the inhibitor of actomyosin ATPase, Tn-T which contains the binding site for tropomyosin and Tn-C. The binding of calcium to Tn-C abolishes the inhibitory action of Tn on actin filaments. This chain is Troponin C, slow skeletal and cardiac muscles (Tnnc1), found in Mus musculus (Mouse).